The sequence spans 61 residues: UPF0181 protein KPN78578_22920 (61 aa).

Belongs to the UPF0181 family.

The protein is UPF0181 protein KPN78578_22920 of Klebsiella pneumoniae subsp. pneumoniae (strain ATCC 700721 / MGH 78578).